The chain runs to 315 residues: 4-hydroxy-3-methylbut-2-enyl diphosphate reductase (315 aa).

Cysteine 18 lines the [4Fe-4S] cluster pocket. Positions 47 and 80 each coordinate (2E)-4-hydroxy-3-methylbut-2-enyl diphosphate. Histidine 47 and histidine 80 together coordinate dimethylallyl diphosphate. 2 residues coordinate isopentenyl diphosphate: histidine 47 and histidine 80. [4Fe-4S] cluster is bound at residue cysteine 102. Histidine 130 serves as a coordination point for (2E)-4-hydroxy-3-methylbut-2-enyl diphosphate. Dimethylallyl diphosphate is bound at residue histidine 130. Histidine 130 lines the isopentenyl diphosphate pocket. The active-site Proton donor is glutamate 132. Position 171 (threonine 171) interacts with (2E)-4-hydroxy-3-methylbut-2-enyl diphosphate. Cysteine 201 is a binding site for [4Fe-4S] cluster. Residues serine 229, serine 230, asparagine 231, and serine 274 each contribute to the (2E)-4-hydroxy-3-methylbut-2-enyl diphosphate site. Serine 229, serine 230, asparagine 231, and serine 274 together coordinate dimethylallyl diphosphate. The isopentenyl diphosphate site is built by serine 229, serine 230, asparagine 231, and serine 274.

This sequence belongs to the IspH family. It depends on [4Fe-4S] cluster as a cofactor.

It catalyses the reaction isopentenyl diphosphate + 2 oxidized [2Fe-2S]-[ferredoxin] + H2O = (2E)-4-hydroxy-3-methylbut-2-enyl diphosphate + 2 reduced [2Fe-2S]-[ferredoxin] + 2 H(+). The catalysed reaction is dimethylallyl diphosphate + 2 oxidized [2Fe-2S]-[ferredoxin] + H2O = (2E)-4-hydroxy-3-methylbut-2-enyl diphosphate + 2 reduced [2Fe-2S]-[ferredoxin] + 2 H(+). The protein operates within isoprenoid biosynthesis; dimethylallyl diphosphate biosynthesis; dimethylallyl diphosphate from (2E)-4-hydroxy-3-methylbutenyl diphosphate: step 1/1. It participates in isoprenoid biosynthesis; isopentenyl diphosphate biosynthesis via DXP pathway; isopentenyl diphosphate from 1-deoxy-D-xylulose 5-phosphate: step 6/6. Catalyzes the conversion of 1-hydroxy-2-methyl-2-(E)-butenyl 4-diphosphate (HMBPP) into a mixture of isopentenyl diphosphate (IPP) and dimethylallyl diphosphate (DMAPP). Acts in the terminal step of the DOXP/MEP pathway for isoprenoid precursor biosynthesis. In Hyphomonas neptunium (strain ATCC 15444), this protein is 4-hydroxy-3-methylbut-2-enyl diphosphate reductase.